Consider the following 36-residue polypeptide: Protein usd (36 aa).

Its function is as follows. Required for translation of SpoIIID. This is Protein usd (usd) from Bacillus subtilis (strain 168).